The following is a 196-amino-acid chain: Holliday junction branch migration complex subunit RuvA (196 aa).

Residues Met1–Gln61 form a domain I region. Positions Ser62–Asp140 are domain II. Positions Glu141–Ala149 are flexible linker. Positions Ala149–Lys196 are domain III.

It belongs to the RuvA family. As to quaternary structure, homotetramer. Forms an RuvA(8)-RuvB(12)-Holliday junction (HJ) complex. HJ DNA is sandwiched between 2 RuvA tetramers; dsDNA enters through RuvA and exits via RuvB. An RuvB hexamer assembles on each DNA strand where it exits the tetramer. Each RuvB hexamer is contacted by two RuvA subunits (via domain III) on 2 adjacent RuvB subunits; this complex drives branch migration. In the full resolvosome a probable DNA-RuvA(4)-RuvB(12)-RuvC(2) complex forms which resolves the HJ.

It localises to the cytoplasm. In terms of biological role, the RuvA-RuvB-RuvC complex processes Holliday junction (HJ) DNA during genetic recombination and DNA repair, while the RuvA-RuvB complex plays an important role in the rescue of blocked DNA replication forks via replication fork reversal (RFR). RuvA specifically binds to HJ cruciform DNA, conferring on it an open structure. The RuvB hexamer acts as an ATP-dependent pump, pulling dsDNA into and through the RuvAB complex. HJ branch migration allows RuvC to scan DNA until it finds its consensus sequence, where it cleaves and resolves the cruciform DNA. This is Holliday junction branch migration complex subunit RuvA from Lactobacillus helveticus (strain DPC 4571).